Here is a 423-residue protein sequence, read N- to C-terminus: G-protein coupled receptor 83 (423 aa).

A signal peptide spans 1–17; it reads MKVPPVLLLFLLSSVRA. The Extracellular portion of the chain corresponds to 18 to 71; that stretch reads TEQPQVVTEHPSMEAALTGPNASSHFWANYTFSDWQNFVGRRRYGAESQNPTVK. 2 N-linked (GlcNAc...) asparagine glycosylation sites follow: Asn38 and Asn46. The chain crosses the membrane as a helical span at residues 72-92; it reads ALLIVAYSFTIVFSLFGNVLV. Topologically, residues 93-107 are cytoplasmic; it reads CHVIFKNQRMHSATS. The helical transmembrane segment at 108-129 threads the bilayer; that stretch reads LFIVNLAVADIMITLLNTPFTL. The Extracellular portion of the chain corresponds to 130–145; that stretch reads VRFVNSTWVFGKGMCH. N-linked (GlcNAc...) asparagine glycosylation is present at Asn134. A disulfide bond links Cys144 and Cys224. A helical transmembrane segment spans residues 146–167; it reads VSRFAQYCSLHVSALTLTAIAV. At 168–186 the chain is on the cytoplasmic side; sequence DRHQVIMHPLKPRISITKG. Residues 187-208 form a helical membrane-spanning segment; the sequence is VIYIAVIWVMATFFSLPHAICQ. Topologically, residues 209–238 are extracellular; it reads KLFTFKYSEDIVRSLCLPDFPEPADLFWKY. Residues 239–260 traverse the membrane as a helical segment; it reads LDLATFILLYLLPLFIISVAYA. Topologically, residues 261–293 are cytoplasmic; the sequence is RVAKKLWLCNTIGDVTTEQYLALRRKKKTTVKM. Residues 294–315 traverse the membrane as a helical segment; that stretch reads LVLVVVLFALCWFPLNCYVLLL. The Extracellular segment spans residues 316–327; it reads SSKAIHTNNALY. The helical transmembrane segment at 328–348 threads the bilayer; sequence FAFHWFAMSSTCYNPFIYCWL. The Cytoplasmic segment spans residues 349-423; sequence NENFRVELKA…SSVEPVVAMS (75 aa). Positions 389–423 are disordered; it reads SHGRRAPLPNHHLPSSQIQSGKTDLSSVEPVVAMS. Residues 401–414 show a composition bias toward polar residues; sequence LPSSQIQSGKTDLS.

It belongs to the G-protein coupled receptor 1 family. Predominantly expressed in the brain, with moderate expression in the hypothalamus. Expressed in the thymus.

The protein localises to the cell membrane. Its function is as follows. G-protein coupled receptor for PEN, a neuropeptide produced from the precursor protein, proSAAS (encoded by PCSK1N). Acts through a G(i)- and G(q)-alpha-alpha-mediated pathway in response to PEN. Plays a role in food intake and body weight regulation. May contribute to the regulation of anxiety-related behaviors. The sequence is that of G-protein coupled receptor 83 from Mus musculus (Mouse).